Consider the following 337-residue polypeptide: NADH-quinone oxidoreductase subunit H (337 aa).

8 helical membrane passes run 13–33, 82–102, 115–135, 154–174, 187–207, 248–268, 274–294, and 313–333; these read IIIV…IAYL, AVFI…WAVI, VGVL…IMAG, MVSY…SAGS, GVWY…SILA, ILMS…PVDI, IPGI…FLWV, and VFLP…VTFD.

The protein belongs to the complex I subunit 1 family. As to quaternary structure, NDH-1 is composed of 14 different subunits. Subunits NuoA, H, J, K, L, M, N constitute the membrane sector of the complex.

It is found in the cell inner membrane. It carries out the reaction a quinone + NADH + 5 H(+)(in) = a quinol + NAD(+) + 4 H(+)(out). Its function is as follows. NDH-1 shuttles electrons from NADH, via FMN and iron-sulfur (Fe-S) centers, to quinones in the respiratory chain. The immediate electron acceptor for the enzyme in this species is believed to be ubiquinone. Couples the redox reaction to proton translocation (for every two electrons transferred, four hydrogen ions are translocated across the cytoplasmic membrane), and thus conserves the redox energy in a proton gradient. This subunit may bind ubiquinone. The polypeptide is NADH-quinone oxidoreductase subunit H (Rhodospirillum rubrum (strain ATCC 11170 / ATH 1.1.1 / DSM 467 / LMG 4362 / NCIMB 8255 / S1)).